Consider the following 322-residue polypeptide: uncharacterized protein (322 aa).

Residues 212–234 (VCALLVGAISVATAGAAFSIIIV) form a helical membrane-spanning segment.

Its subcellular location is the membrane. This is an uncharacterized protein from Rickettsia prowazekii (strain Madrid E).